Here is a 502-residue protein sequence, read N- to C-terminus: Probable glycine dehydrogenase (decarboxylating) subunit 2 (502 aa).

At lysine 273 the chain carries N6-(pyridoxal phosphate)lysine.

It belongs to the GcvP family. C-terminal subunit subfamily. The glycine cleavage system is composed of four proteins: P, T, L and H. In this organism, the P 'protein' is a heterodimer of two subunits. Pyridoxal 5'-phosphate serves as cofactor.

It carries out the reaction N(6)-[(R)-lipoyl]-L-lysyl-[glycine-cleavage complex H protein] + glycine + H(+) = N(6)-[(R)-S(8)-aminomethyldihydrolipoyl]-L-lysyl-[glycine-cleavage complex H protein] + CO2. In terms of biological role, the glycine cleavage system catalyzes the degradation of glycine. The P protein binds the alpha-amino group of glycine through its pyridoxal phosphate cofactor; CO(2) is released and the remaining methylamine moiety is then transferred to the lipoamide cofactor of the H protein. This Pyrococcus furiosus (strain ATCC 43587 / DSM 3638 / JCM 8422 / Vc1) protein is Probable glycine dehydrogenase (decarboxylating) subunit 2.